A 117-amino-acid polypeptide reads, in one-letter code: Cell cycle protein GpsB (117 aa).

Positions L32–G70 form a coiled coil.

It belongs to the GpsB family. As to quaternary structure, forms polymers through the coiled coil domains. Interacts with PBP1, MreC and EzrA.

Its subcellular location is the cytoplasm. Divisome component that associates with the complex late in its assembly, after the Z-ring is formed, and is dependent on DivIC and PBP2B for its recruitment to the divisome. Together with EzrA, is a key component of the system that regulates PBP1 localization during cell cycle progression. Its main role could be the removal of PBP1 from the cell pole after pole maturation is completed. Also contributes to the recruitment of PBP1 to the division complex. Not essential for septum formation. The protein is Cell cycle protein GpsB of Levilactobacillus brevis (strain ATCC 367 / BCRC 12310 / CIP 105137 / JCM 1170 / LMG 11437 / NCIMB 947 / NCTC 947) (Lactobacillus brevis).